Reading from the N-terminus, the 343-residue chain is MMNENLDATGENFSPEEFDVERALRPLSFDDFAGQEQVLENLQIFVQAANLRGEALDHTLFHGPPGLGKTTLAHILANELNVGIKITSGPVLDKPGDLAGLLTNLDERDILFIDEIHRLSPIVEEYLYSAMEDYRIDIMIETGPNARTVQINLNPFTLIGATTRSGLLTAPMRARFGISSRLQYYSTELLSGIVERSSDILKVPITQDAAIEIAGRSRGTPRIANALLRRVRDFAQIKGNGKIDIEIAKFGLKALNVDAHGLDEMDNKILATIIDKFKGGPVGITTLATAVSESAETIEEVYEPFLIQQGFIYRTPRGREVTEHAYRHLGRVKGSNQGGLFDN.

A large ATPase domain (RuvB-L) region spans residues 1–185; that stretch reads MMNENLDATG…FGISSRLQYY (185 aa). Residues L24, R25, G66, K69, T70, T71, 132-134, R175, Y185, and R222 each bind ATP; that span reads EDY. T70 serves as a coordination point for Mg(2+). A small ATPAse domain (RuvB-S) region spans residues 186 to 256; that stretch reads STELLSGIVE…IAKFGLKALN (71 aa). Residues 259-343 form a head domain (RuvB-H) region; that stretch reads AHGLDEMDNK…GSNQGGLFDN (85 aa). Residues R314 and R319 each coordinate DNA.

This sequence belongs to the RuvB family. Homohexamer. Forms an RuvA(8)-RuvB(12)-Holliday junction (HJ) complex. HJ DNA is sandwiched between 2 RuvA tetramers; dsDNA enters through RuvA and exits via RuvB. An RuvB hexamer assembles on each DNA strand where it exits the tetramer. Each RuvB hexamer is contacted by two RuvA subunits (via domain III) on 2 adjacent RuvB subunits; this complex drives branch migration. In the full resolvosome a probable DNA-RuvA(4)-RuvB(12)-RuvC(2) complex forms which resolves the HJ.

It localises to the cytoplasm. It catalyses the reaction ATP + H2O = ADP + phosphate + H(+). In terms of biological role, the RuvA-RuvB-RuvC complex processes Holliday junction (HJ) DNA during genetic recombination and DNA repair, while the RuvA-RuvB complex plays an important role in the rescue of blocked DNA replication forks via replication fork reversal (RFR). RuvA specifically binds to HJ cruciform DNA, conferring on it an open structure. The RuvB hexamer acts as an ATP-dependent pump, pulling dsDNA into and through the RuvAB complex. RuvB forms 2 homohexamers on either side of HJ DNA bound by 1 or 2 RuvA tetramers; 4 subunits per hexamer contact DNA at a time. Coordinated motions by a converter formed by DNA-disengaged RuvB subunits stimulates ATP hydrolysis and nucleotide exchange. Immobilization of the converter enables RuvB to convert the ATP-contained energy into a lever motion, pulling 2 nucleotides of DNA out of the RuvA tetramer per ATP hydrolyzed, thus driving DNA branch migration. The RuvB motors rotate together with the DNA substrate, which together with the progressing nucleotide cycle form the mechanistic basis for DNA recombination by continuous HJ branch migration. Branch migration allows RuvC to scan DNA until it finds its consensus sequence, where it cleaves and resolves cruciform DNA. This Christiangramia forsetii (strain DSM 17595 / CGMCC 1.15422 / KT0803) (Gramella forsetii) protein is Holliday junction branch migration complex subunit RuvB.